Here is a 288-residue protein sequence, read N- to C-terminus: MDRSMVKGPLYKQFDLERKSARQAEARLSLRLQRLEIICLYHVKSLAREQRQLQKELQRLQQDIIKKRFSSYVGHEIQKRSKDVVTFLPPTGQRHAVPEPKIRTLKNSVTQEVKTKIPVPSLHDPVLKDTLRSQEHLLSHGERTSCFKEGSPQGQEGEPTNPLKGVDPSKDVSVPCHDQELSTNKTEDSGVSSQDGERGSAPANETRSENASQKPRGDADVQNSPSSVDYAGSFKDERTKPSFLELFEKAKNAHYVRHRVPPESERLLSIGEIFGHKHYSLPRTGETL.

Residues 16-69 are a coiled coil; that stretch reads LERKSARQAEARLSLRLQRLEIICLYHVKSLAREQRQLQKELQRLQQDIIKKRF. Positions 141–235 are disordered; the sequence is GERTSCFKEG…SSVDYAGSFK (95 aa). Positions 177 to 188 are enriched in basic and acidic residues; it reads HDQELSTNKTED. Residues 203–213 are compositionally biased toward polar residues; the sequence is ANETRSENASQ.

The chain is Coiled-coil domain-containing protein 190 (Ccdc190) from Mus musculus (Mouse).